Reading from the N-terminus, the 120-residue chain is 5-hydroxyisourate hydrolase 2 (120 aa).

3 residues coordinate substrate: His10, Arg48, and Tyr117.

It belongs to the transthyretin family. 5-hydroxyisourate hydrolase subfamily. As to quaternary structure, homotetramer.

It carries out the reaction 5-hydroxyisourate + H2O = 5-hydroxy-2-oxo-4-ureido-2,5-dihydro-1H-imidazole-5-carboxylate + H(+). In terms of biological role, catalyzes the hydrolysis of 5-hydroxyisourate (HIU) to 2-oxo-4-hydroxy-4-carboxy-5-ureidoimidazoline (OHCU). The polypeptide is 5-hydroxyisourate hydrolase 2 (Rhizobium meliloti (strain 1021) (Ensifer meliloti)).